The primary structure comprises 28 residues: Taicatoxin, alpha-neurotoxin-like component (28 aa).

A disulfide bridge links Cys-3 with Cys-21.

This sequence belongs to the three-finger toxin family. Long-chain subfamily. Type II alpha-neurotoxin sub-subfamily. As to quaternary structure, heterotrimer composed of this alpha-neurotoxin-like peptide of 8 kDa, a neurotoxic phospholipase of 16 kDa (AC Q7LZG2) and a serine protease inhibitor of 7 kDa (AC B7S4N9) at an approximate stoichiometry of 1:1:4; non-covalently linked. Expressed by the venom gland.

It is found in the secreted. In terms of biological role, the heterotrimer blocks the voltage-dependent L-type calcium channels (Cav1/CACNA1) from the heart, and the small conductance calcium-activated potassium channels (KCa2/KCNN) in the chromaffin cells and in the brain. Is very toxic to mice. The sequence is that of Taicatoxin, alpha-neurotoxin-like component from Oxyuranus scutellatus scutellatus (Australian taipan).